A 617-amino-acid polypeptide reads, in one-letter code: Phosphomethylpyrimidine synthase (617 aa).

Substrate is bound by residues asparagine 230, methionine 259, tyrosine 288, histidine 324, 344–346, 385–388, and glutamate 424; these read SRG and DGLR. Histidine 428 serves as a coordination point for Zn(2+). Tyrosine 451 is a substrate binding site. Histidine 492 is a Zn(2+) binding site. [4Fe-4S] cluster-binding residues include cysteine 572, cysteine 575, and cysteine 580.

The protein belongs to the ThiC family. In terms of assembly, homodimer. It depends on [4Fe-4S] cluster as a cofactor.

It carries out the reaction 5-amino-1-(5-phospho-beta-D-ribosyl)imidazole + S-adenosyl-L-methionine = 4-amino-2-methyl-5-(phosphooxymethyl)pyrimidine + CO + 5'-deoxyadenosine + formate + L-methionine + 3 H(+). Its pathway is cofactor biosynthesis; thiamine diphosphate biosynthesis. Functionally, catalyzes the synthesis of the hydroxymethylpyrimidine phosphate (HMP-P) moiety of thiamine from aminoimidazole ribotide (AIR) in a radical S-adenosyl-L-methionine (SAM)-dependent reaction. The chain is Phosphomethylpyrimidine synthase from Paracidovorax citrulli (strain AAC00-1) (Acidovorax citrulli).